Here is a 258-residue protein sequence, read N- to C-terminus: Type III pantothenate kinase (258 aa).

Residue D6–V13 participates in ATP binding. Residues Y100 and G107 to R110 contribute to the substrate site. D109 serves as the catalytic Proton acceptor. Residue D129 participates in K(+) binding. T132 is an ATP binding site. T184 provides a ligand contact to substrate.

The protein belongs to the type III pantothenate kinase family. In terms of assembly, homodimer. NH4(+) is required as a cofactor. It depends on K(+) as a cofactor.

The protein localises to the cytoplasm. The catalysed reaction is (R)-pantothenate + ATP = (R)-4'-phosphopantothenate + ADP + H(+). It participates in cofactor biosynthesis; coenzyme A biosynthesis; CoA from (R)-pantothenate: step 1/5. Functionally, catalyzes the phosphorylation of pantothenate (Pan), the first step in CoA biosynthesis. The chain is Type III pantothenate kinase from Geobacillus thermodenitrificans (strain NG80-2).